Here is a 494-residue protein sequence, read N- to C-terminus: 4-trimethylaminobutyraldehyde dehydrogenase (494 aa).

N-acetylserine is present on serine 2. Residue lysine 30 is modified to N6-acetyllysine; alternate. Residue lysine 30 is modified to N6-succinyllysine; alternate. Lysine 59 bears the N6-succinyllysine mark. NAD(+) is bound by residues lysine 180 and 232–236; that span reads GSVPT. Glutamate 254 acts as the Proton acceptor in catalysis. Cysteine 288 acts as the Nucleophile in catalysis. Lysine 298 is modified (N6-acetyllysine). The residue at position 303 (lysine 303) is an N6-acetyllysine; alternate. At lysine 303 the chain carries N6-succinyllysine; alternate. Lysine 344 bears the N6-acetyllysine mark. Residue glutamate 391 participates in NAD(+) binding.

This sequence belongs to the aldehyde dehydrogenase family. In terms of assembly, homotetramer.

The protein localises to the cytoplasm. It localises to the cytosol. It carries out the reaction 4-(trimethylamino)butanal + NAD(+) + H2O = 4-(trimethylamino)butanoate + NADH + 2 H(+). The catalysed reaction is an aldehyde + NAD(+) + H2O = a carboxylate + NADH + 2 H(+). It catalyses the reaction 4-aminobutanal + NAD(+) + H2O = 4-aminobutanoate + NADH + 2 H(+). The enzyme catalyses formaldehyde + NAD(+) + H2O = formate + NADH + 2 H(+). It carries out the reaction acetaldehyde + NAD(+) + H2O = acetate + NADH + 2 H(+). The catalysed reaction is imidazole-4-acetaldehyde + NAD(+) + H2O = imidazole-4-acetate + NADH + 2 H(+). It catalyses the reaction acrolein + NAD(+) + H2O = acrylate + NADH + 2 H(+). The enzyme catalyses (5-hydroxyindol-3-yl)acetaldehyde + NAD(+) + H2O = (5-hydroxyindol-3-yl)acetate + NADH + 2 H(+). It carries out the reaction 3,4-dihydroxyphenylacetaldehyde + NAD(+) + H2O = 3,4-dihydroxyphenylacetate + NADH + 2 H(+). The catalysed reaction is spermine monoaldehyde + NAD(+) + H2O = N-(2-carboxyethyl)spermidine + NADH + 2 H(+). It catalyses the reaction propanal + NAD(+) + H2O = propanoate + NADH + 2 H(+). The enzyme catalyses butanal + NAD(+) + H2O = butanoate + NADH + 2 H(+). It carries out the reaction pentanal + NAD(+) + H2O = pentanoate + NADH + 2 H(+). The catalysed reaction is hexanal + NAD(+) + H2O = hexanoate + NADH + 2 H(+). It functions in the pathway amine and polyamine biosynthesis; carnitine biosynthesis. Its function is as follows. Converts gamma-trimethylaminobutyraldehyde into gamma-butyrobetaine with high efficiency (in vitro). Can catalyze the irreversible oxidation of a broad range of aldehydes to the corresponding acids in an NAD-dependent reaction, but with low efficiency. Catalyzes the oxidation of aldehydes arising from biogenic amines and polyamines. This chain is 4-trimethylaminobutyraldehyde dehydrogenase (ALDH9A1), found in Pongo abelii (Sumatran orangutan).